The following is a 318-amino-acid chain: NADH-ubiquinone oxidoreductase chain 1 (318 aa).

8 consecutive transmembrane segments (helical) span residues 2 to 22, 70 to 90, 100 to 120, 136 to 156, 172 to 192, 222 to 242, 253 to 273, and 294 to 314; these read FMIN…FLTL, MFII…SPLP, LGVL…LWSG, VAQT…VLLM, LWLL…TLAE, LFFL…AILF, ELYT…FLWI, and LPLT…TASI.

It belongs to the complex I subunit 1 family. Core subunit of respiratory chain NADH dehydrogenase (Complex I) which is composed of 45 different subunits.

The protein resides in the mitochondrion inner membrane. It catalyses the reaction a ubiquinone + NADH + 5 H(+)(in) = a ubiquinol + NAD(+) + 4 H(+)(out). In terms of biological role, core subunit of the mitochondrial membrane respiratory chain NADH dehydrogenase (Complex I) which catalyzes electron transfer from NADH through the respiratory chain, using ubiquinone as an electron acceptor. Essential for the catalytic activity and assembly of complex I. The polypeptide is NADH-ubiquinone oxidoreductase chain 1 (MT-ND1) (Balaenoptera musculus (Blue whale)).